Consider the following 330-residue polypeptide: MKTAYIAKQRQISFVKSHFSRQLEERLGLIEVQAPILSRVGDGTQDNLSGCEKAVQVKVKALPDAQFEVVHSLAKWKRQTLGQHDFSAGEGLYTHMKALRPDEDRLSPLHSVYVDQWDWERVMGDGERQFSTLKSTVEAIWAGIKATEAAVSEEFGLAPFLPDQIHFVHSQELLSRYPDLDAKGRERAIAKDLGAVFLVGIGGKLSDGHRHDVRAPDYDDWSTPSELGHAGLNGDILVWNPVLEDAFELSSMGIRVDAETLKHQLALTGDEDRLQLDWHQALLRGEMPQTIGGGIGQSRLTMLLLQLPHIGQVQCGVWPAAVRESVPSLL.

This sequence belongs to the class-II aminoacyl-tRNA synthetase family. AsnA subfamily.

It is found in the cytoplasm. It catalyses the reaction L-aspartate + NH4(+) + ATP = L-asparagine + AMP + diphosphate + H(+). The protein operates within amino-acid biosynthesis; L-asparagine biosynthesis; L-asparagine from L-aspartate (ammonia route): step 1/1. The protein is Aspartate--ammonia ligase of Escherichia fergusonii (strain ATCC 35469 / DSM 13698 / CCUG 18766 / IAM 14443 / JCM 21226 / LMG 7866 / NBRC 102419 / NCTC 12128 / CDC 0568-73).